The following is a 423-amino-acid chain: 26S proteasome regulatory subunit 6A homolog (423 aa).

211–218 (GPPGTGKT) provides a ligand contact to ATP.

Belongs to the AAA ATPase family.

The protein resides in the cytoplasm. Its subcellular location is the nucleus. Its function is as follows. The 26S proteasome is involved in the ATP-dependent degradation of ubiquitinated proteins. The regulatory (or ATPase) complex confers ATP dependency and substrate specificity to the 26S complex. The protein is 26S proteasome regulatory subunit 6A homolog (TBP1) of Solanum lycopersicum (Tomato).